Consider the following 236-residue polypeptide: 2,3,4,5-tetrahydropyridine-2,6-dicarboxylate N-acetyltransferase (236 aa).

It belongs to the transferase hexapeptide repeat family. DapH subfamily.

It carries out the reaction (S)-2,3,4,5-tetrahydrodipicolinate + acetyl-CoA + H2O = L-2-acetamido-6-oxoheptanedioate + CoA. Its pathway is amino-acid biosynthesis; L-lysine biosynthesis via DAP pathway; LL-2,6-diaminopimelate from (S)-tetrahydrodipicolinate (acetylase route): step 1/3. Catalyzes the transfer of an acetyl group from acetyl-CoA to tetrahydrodipicolinate. The chain is 2,3,4,5-tetrahydropyridine-2,6-dicarboxylate N-acetyltransferase from Lactiplantibacillus plantarum (strain ATCC BAA-793 / NCIMB 8826 / WCFS1) (Lactobacillus plantarum).